Here is a 373-residue protein sequence, read N- to C-terminus: Probable tRNA sulfurtransferase (373 aa).

In terms of domain architecture, THUMP spans 54–158 (NKNIEELSKV…NDVAYFYYKI (105 aa)). ATP-binding positions include 176 to 177 (LF), 201 to 202 (NF), lysine 256, glycine 278, and glutamine 287.

The protein belongs to the ThiI family.

It localises to the cytoplasm. It catalyses the reaction [ThiI sulfur-carrier protein]-S-sulfanyl-L-cysteine + a uridine in tRNA + 2 reduced [2Fe-2S]-[ferredoxin] + ATP + H(+) = [ThiI sulfur-carrier protein]-L-cysteine + a 4-thiouridine in tRNA + 2 oxidized [2Fe-2S]-[ferredoxin] + AMP + diphosphate. It carries out the reaction [ThiS sulfur-carrier protein]-C-terminal Gly-Gly-AMP + S-sulfanyl-L-cysteinyl-[cysteine desulfurase] + AH2 = [ThiS sulfur-carrier protein]-C-terminal-Gly-aminoethanethioate + L-cysteinyl-[cysteine desulfurase] + A + AMP + 2 H(+). The protein operates within cofactor biosynthesis; thiamine diphosphate biosynthesis. Its function is as follows. Catalyzes the ATP-dependent transfer of a sulfur to tRNA to produce 4-thiouridine in position 8 of tRNAs, which functions as a near-UV photosensor. Also catalyzes the transfer of sulfur to the sulfur carrier protein ThiS, forming ThiS-thiocarboxylate. This is a step in the synthesis of thiazole, in the thiamine biosynthesis pathway. The sulfur is donated as persulfide by IscS. This chain is Probable tRNA sulfurtransferase, found in Saccharolobus islandicus (strain L.S.2.15 / Lassen #1) (Sulfolobus islandicus).